A 640-amino-acid polypeptide reads, in one-letter code: UvrABC system protein C (640 aa).

The GIY-YIG domain maps to 22–101; sequence NDPGCYLMKD…IKSHQPYFNV (80 aa). The region spanning 211–246 is the UVR domain; it reads DELRILLEKQMISFSESLKFEEAGSVRDQLKGIDRL.

This sequence belongs to the UvrC family. In terms of assembly, interacts with UvrB in an incision complex.

It localises to the cytoplasm. The UvrABC repair system catalyzes the recognition and processing of DNA lesions. UvrC both incises the 5' and 3' sides of the lesion. The N-terminal half is responsible for the 3' incision and the C-terminal half is responsible for the 5' incision. This Prochlorococcus marinus (strain NATL1A) protein is UvrABC system protein C.